A 475-amino-acid chain; its full sequence is Ribulose bisphosphate carboxylase large chain (475 aa).

Positions 1–2 are excised as a propeptide; that stretch reads MS. At Pro3 the chain carries N-acetylproline. Lys14 is modified (N6,N6,N6-trimethyllysine). Substrate-binding residues include Asn123 and Thr173. Catalysis depends on Lys175, which acts as the Proton acceptor. Residue Lys177 coordinates substrate. 3 residues coordinate Mg(2+): Lys201, Asp203, and Glu204. Lys201 is subject to N6-carboxylysine. Catalysis depends on His294, which acts as the Proton acceptor. Residues Arg295, His327, and Ser379 each coordinate substrate.

It belongs to the RuBisCO large chain family. Type I subfamily. Heterohexadecamer of 8 large chains and 8 small chains; disulfide-linked. The disulfide link is formed within the large subunit homodimers. Requires Mg(2+) as cofactor. Post-translationally, the disulfide bond which can form in the large chain dimeric partners within the hexadecamer appears to be associated with oxidative stress and protein turnover.

The protein resides in the plastid. The protein localises to the chloroplast. The catalysed reaction is 2 (2R)-3-phosphoglycerate + 2 H(+) = D-ribulose 1,5-bisphosphate + CO2 + H2O. It catalyses the reaction D-ribulose 1,5-bisphosphate + O2 = 2-phosphoglycolate + (2R)-3-phosphoglycerate + 2 H(+). Functionally, ruBisCO catalyzes two reactions: the carboxylation of D-ribulose 1,5-bisphosphate, the primary event in carbon dioxide fixation, as well as the oxidative fragmentation of the pentose substrate in the photorespiration process. Both reactions occur simultaneously and in competition at the same active site. This is Ribulose bisphosphate carboxylase large chain from Betula papyrifera (Paper birch).